We begin with the raw amino-acid sequence, 283 residues long: Protein canopy homolog 3 (283 aa).

Residues 1–35 (MEPLPEPTSRPRLRPRPRCLLLLPLLLLLLLLLPA) form the signal peptide. The region spanning 55 to 276 (SKCEVCKYVA…EGIQKASPLT (222 aa)) is the Saposin B-type domain. N-linked (GlcNAc...) asparagine glycosylation is present at asparagine 161. A coiled-coil region spans residues 161–187 (NETSAEVADLKKQCDVLVEEFEEVIED). Residues 223–283 (KGDTAALGGK…PLTHSPPDEL (61 aa)) form a disordered region.

Belongs to the canopy family. Interacts with HSP90B1; this interaction is disrupted in the presence of ATP. Interacts with TLR1, TLR2, TLR4 and TLR9.

The protein localises to the endoplasmic reticulum. Its function is as follows. Toll-like receptor (TLR)-specific co-chaperone for HSP90B1. Required for proper TLR folding, except that of TLR3, and hence controls TLR exit from the endoplasmic reticulum. Consequently, required for both innate and adaptive immune responses. The sequence is that of Protein canopy homolog 3 (CNPY3) from Sus scrofa (Pig).